The following is a 354-amino-acid chain: DNA integrity scanning protein DisA (354 aa).

The DAC domain occupies 6–144; it reads EKELKSILKL…GHIKYVLRDS (139 aa). ATP contacts are provided by residues Gly-73, Leu-91, and 104-108; that span reads TRHRT.

It belongs to the DisA family. As to quaternary structure, homooctamer. It depends on Mg(2+) as a cofactor.

The catalysed reaction is 2 ATP = 3',3'-c-di-AMP + 2 diphosphate. Functionally, participates in a DNA-damage check-point that is active prior to asymmetric division when DNA is damaged. DisA forms globular foci that rapidly scan along the chromosomes during sporulation, searching for lesions. When a lesion is present, DisA pauses at the lesion site. This triggers a cellular response that culminates in a temporary block in sporulation initiation. Its function is as follows. Also has diadenylate cyclase activity, catalyzing the condensation of 2 ATP molecules into cyclic di-AMP (c-di-AMP). c-di-AMP acts as a signaling molecule that couples DNA integrity with progression of sporulation. The rise in c-di-AMP level generated by DisA while scanning the chromosome, operates as a positive signal that advances sporulation; upon encountering a lesion, the DisA focus arrests at the damaged site and halts c-di-AMP synthesis. The chain is DNA integrity scanning protein DisA from Clostridium kluyveri (strain ATCC 8527 / DSM 555 / NBRC 12016 / NCIMB 10680 / K1).